The sequence spans 668 residues: Hemocyanin subunit D (668 aa).

An N-terminal signal peptide occupies residues 1–22 (MDTRVLRLTLALVALSGVLADS). Cu cation-binding residues include histidine 206, histidine 210, and histidine 236. N-linked (GlcNAc...) asparagine glycosylation occurs at asparagine 322. Histidine 357, histidine 361, and histidine 397 together coordinate Cu cation. Cysteine 567 and cysteine 614 are joined by a disulfide.

Belongs to the tyrosinase family. Hemocyanin subfamily. In terms of assembly, 36-chain polymer consisting of 6 hexamers, each of which includes 4 different chains, A, B, C and D. In terms of tissue distribution, hemolymph.

The protein resides in the secreted. Its subcellular location is the extracellular space. Hemocyanins are copper-containing oxygen carriers occurring freely dissolved in the hemolymph of many mollusks and arthropods. The chain is Hemocyanin subunit D (HCD) from Scutigera coleoptrata (House centipede).